A 115-amino-acid polypeptide reads, in one-letter code: Large ribosomal subunit protein uL22 (115 aa).

The protein belongs to the universal ribosomal protein uL22 family. In terms of assembly, part of the 50S ribosomal subunit.

Functionally, this protein binds specifically to 23S rRNA; its binding is stimulated by other ribosomal proteins, e.g. L4, L17, and L20. It is important during the early stages of 50S assembly. It makes multiple contacts with different domains of the 23S rRNA in the assembled 50S subunit and ribosome. Its function is as follows. The globular domain of the protein is located near the polypeptide exit tunnel on the outside of the subunit, while an extended beta-hairpin is found that lines the wall of the exit tunnel in the center of the 70S ribosome. This chain is Large ribosomal subunit protein uL22, found in Endomicrobium trichonymphae.